The chain runs to 129 residues: HTH-type transcriptional regulator HmrR (129 aa).

Residues 1-68 form the HTH merR-type domain; that stretch reads MNIGEASERS…VEECRQLLAL (68 aa). The H-T-H motif DNA-binding region spans 4-23; it reads GEASERSGLPSKTIRYYEDI.

As to quaternary structure, homodimer.

The protein localises to the cytoplasm. Its function is as follows. Regulates the transcription of actP. It detects cytoplasmic copper stress and activates transcription in response to increasing copper concentrations. In the absence of copper, it negatively regulates the transcription of actP. This Rhizobium leguminosarum bv. viciae protein is HTH-type transcriptional regulator HmrR (hmrR).